Reading from the N-terminus, the 509-residue chain is ATP synthase subunit alpha (509 aa).

An ATP-binding site is contributed by 169–176 (GDRQTGKT).

This sequence belongs to the ATPase alpha/beta chains family. As to quaternary structure, F-type ATPases have 2 components, CF(1) - the catalytic core - and CF(0) - the membrane proton channel. CF(1) has five subunits: alpha(3), beta(3), gamma(1), delta(1), epsilon(1). CF(0) has three main subunits: a(1), b(2) and c(9-12). The alpha and beta chains form an alternating ring which encloses part of the gamma chain. CF(1) is attached to CF(0) by a central stalk formed by the gamma and epsilon chains, while a peripheral stalk is formed by the delta and b chains.

It localises to the cell inner membrane. The enzyme catalyses ATP + H2O + 4 H(+)(in) = ADP + phosphate + 5 H(+)(out). In terms of biological role, produces ATP from ADP in the presence of a proton gradient across the membrane. The alpha chain is a regulatory subunit. This Agrobacterium fabrum (strain C58 / ATCC 33970) (Agrobacterium tumefaciens (strain C58)) protein is ATP synthase subunit alpha.